Reading from the N-terminus, the 269-residue chain is Orotidine 5'-phosphate decarboxylase (269 aa).

The active-site Proton donor is the K92.

This sequence belongs to the OMP decarboxylase family. Type 2 subfamily.

The catalysed reaction is orotidine 5'-phosphate + H(+) = UMP + CO2. The protein operates within pyrimidine metabolism; UMP biosynthesis via de novo pathway; UMP from orotate: step 2/2. The protein is Orotidine 5'-phosphate decarboxylase of Natronomonas pharaonis (strain ATCC 35678 / DSM 2160 / CIP 103997 / JCM 8858 / NBRC 14720 / NCIMB 2260 / Gabara) (Halobacterium pharaonis).